Here is a 245-residue protein sequence, read N- to C-terminus: Eukaryotic translation initiation factor 6-2 (245 aa).

Belongs to the eIF-6 family. In terms of assembly, monomer. Associates with the 60S ribosomal subunit.

The protein resides in the cytoplasm. Its subcellular location is the nucleus. The protein localises to the nucleolus. Binds to the 60S ribosomal subunit and prevents its association with the 40S ribosomal subunit to form the 80S initiation complex in the cytoplasm. May also be involved in ribosome biogenesis. This is Eukaryotic translation initiation factor 6-2 from Arabidopsis thaliana (Mouse-ear cress).